Reading from the N-terminus, the 201-residue chain is Probable GTP-binding protein EngB (201 aa).

The EngB-type G domain occupies 22 to 195 (TQPEFAFAGK…WRCIEQFLEV (174 aa)). GTP is bound by residues 30–37 (GKSNVGKS), 57–61 (GKTQT), 75–78 (DLPG), 142–145 (TKLD), and 174–176 (FSS). The Mg(2+) site is built by S37 and T59.

Belongs to the TRAFAC class TrmE-Era-EngA-EngB-Septin-like GTPase superfamily. EngB GTPase family. Mg(2+) is required as a cofactor.

Functionally, necessary for normal cell division and for the maintenance of normal septation. In Lachnoclostridium phytofermentans (strain ATCC 700394 / DSM 18823 / ISDg) (Clostridium phytofermentans), this protein is Probable GTP-binding protein EngB.